The primary structure comprises 238 residues: Probable septum site-determining protein MinC (238 aa).

The protein belongs to the MinC family. Interacts with MinD and FtsZ.

Functionally, cell division inhibitor that blocks the formation of polar Z ring septums. Rapidly oscillates between the poles of the cell to destabilize FtsZ filaments that have formed before they mature into polar Z rings. Prevents FtsZ polymerization. The sequence is that of Probable septum site-determining protein MinC from Aeromonas salmonicida (strain A449).